The following is a 259-amino-acid chain: MTDLKASSLRALKLMDLTTLNDDDTNEKVIALCHQAKTPVGNTAAICIYPRFIPIARKTLKEQGTPDIRIATVTNFPHGNDDIDIALAETRAAIAYGADEVDVVFPYRALIAGNEQVGFDLVKACKDACAAANVLLKVIIETGELKEEALIRKASEISIKAGADFIKTSTGKVPVNATPESARIMMEVIRDMGVSKTVGFKPAGGVRTAEDAQKFLAIADELFGADWADSRHYRFGASSLLASLLKALGHGDGKSASSY.

Catalysis depends on D102, which acts as the Proton donor/acceptor. The active-site Schiff-base intermediate with acetaldehyde is the K167. Catalysis depends on K201, which acts as the Proton donor/acceptor.

It belongs to the DeoC/FbaB aldolase family. DeoC type 2 subfamily.

Its subcellular location is the cytoplasm. It carries out the reaction 2-deoxy-D-ribose 5-phosphate = D-glyceraldehyde 3-phosphate + acetaldehyde. It functions in the pathway carbohydrate degradation; 2-deoxy-D-ribose 1-phosphate degradation; D-glyceraldehyde 3-phosphate and acetaldehyde from 2-deoxy-alpha-D-ribose 1-phosphate: step 2/2. In terms of biological role, catalyzes a reversible aldol reaction between acetaldehyde and D-glyceraldehyde 3-phosphate to generate 2-deoxy-D-ribose 5-phosphate. The sequence is that of Deoxyribose-phosphate aldolase from Salmonella dublin (strain CT_02021853).